The chain runs to 101 residues: Small ribosomal subunit protein bS18c (101 aa).

The protein belongs to the bacterial ribosomal protein bS18 family. As to quaternary structure, part of the 30S ribosomal subunit.

The protein localises to the plastid. Its subcellular location is the chloroplast. The polypeptide is Small ribosomal subunit protein bS18c (Solanum bulbocastanum (Wild potato)).